A 221-amino-acid polypeptide reads, in one-letter code: Holliday junction branch migration complex subunit RuvA (221 aa).

Residues 1–61 (MQIYQFGKIV…DYTKITYGFA (61 aa)) form a domain I region. The interval 62–139 (SFRERILFED…RFNENHKNQT (78 aa)) is domain II. A disordered region spans residues 133–155 (ENHKNQTEETNQDSQEKELEKKD). The interval 140–166 (EETNQDSQEKELEKKDDLADITIQKSN) is flexible linker. The segment covering 146–155 (SQEKELEKKD) has biased composition (basic and acidic residues). Residues 167–221 (LEDKTAANLEDTLKMLGFKPRQIDYALTKVEPNENFENLIENAIKIISNAREFRN) form a domain III region.

Belongs to the RuvA family. As to quaternary structure, homotetramer. Forms an RuvA(8)-RuvB(12)-Holliday junction (HJ) complex. HJ DNA is sandwiched between 2 RuvA tetramers; dsDNA enters through RuvA and exits via RuvB. An RuvB hexamer assembles on each DNA strand where it exits the tetramer. Each RuvB hexamer is contacted by two RuvA subunits (via domain III) on 2 adjacent RuvB subunits; this complex drives branch migration. In the full resolvosome a probable DNA-RuvA(4)-RuvB(12)-RuvC(2) complex forms which resolves the HJ.

It localises to the cytoplasm. In terms of biological role, the RuvA-RuvB-RuvC complex processes Holliday junction (HJ) DNA during genetic recombination and DNA repair, while the RuvA-RuvB complex plays an important role in the rescue of blocked DNA replication forks via replication fork reversal (RFR). RuvA specifically binds to HJ cruciform DNA, conferring on it an open structure. The RuvB hexamer acts as an ATP-dependent pump, pulling dsDNA into and through the RuvAB complex. HJ branch migration allows RuvC to scan DNA until it finds its consensus sequence, where it cleaves and resolves the cruciform DNA. This is Holliday junction branch migration complex subunit RuvA from Mesomycoplasma hyopneumoniae (strain J / ATCC 25934 / NCTC 10110) (Mycoplasma hyopneumoniae).